We begin with the raw amino-acid sequence, 239 residues long: Prolyl hydroxylase EGLN3 (239 aa).

The beta(2)beta(3) 'finger-like' loop stretch occupies residues 62-73; it reads AGPRAGVSKRHL. Residues 88 to 104 form a required for interaction with ADRB2 region; that stretch reads CEAISFLLSLIDRLVLY. Residues 116-214 form the Fe2OG dioxygenase domain; it reads ERSKAMVACY…RYAMTVWYFD (99 aa). Fe cation-binding residues include His-135, Asp-137, and His-196. Residue Arg-205 coordinates 2-oxoglutarate.

As to quaternary structure, interacts with BCL2 (via its BH4 domain); the interaction disrupts the BAX-BCL4 complex inhibiting the anti-apoptotic activity of BCL2. Interacts with WDR83; the interaction leads to almost complete elimination of HIF-mediated reporter activity. Interacts with ADRB2; the interaction hydroxylates ADRB2 facilitating its ubiquitination by the VHL-E3 ligase complex. Interacts with PAX2; the interaction targets PAX2 for destruction. Interacts with PKM; the interaction hydroxylates PKM in hypoxia. Interacts with LIMD1, WTIP and AJUBA. The cofactor is Fe(2+). It depends on L-ascorbate as a cofactor. Ubiquitinated by SIAH1 and/or SIAH2 in response to the unfolded protein response (UPR), leading to its degradation. Widely expressed at low levels. Expressed at higher levels in adult heart (cardiac myocytes, aortic endothelial cells and coronary artery smooth muscle), lung and placenta, and in fetal spleen, heart and skeletal muscle. Also expressed in pancreas. Localized to pancreatic acini and islet cells.

The protein localises to the nucleus. The protein resides in the cytoplasm. The catalysed reaction is L-prolyl-[protein] + 2-oxoglutarate + O2 = trans-4-hydroxy-L-prolyl-[protein] + succinate + CO2. It catalyses the reaction L-prolyl-[hypoxia-inducible factor alpha subunit] + 2-oxoglutarate + O2 = trans-4-hydroxy-L-prolyl-[hypoxia-inducible factor alpha subunit] + succinate + CO2. With respect to regulation, activated in cardiovascular cells and Hela cells following exposure to hypoxia. Inhibited by polynitrogen compounds probably by chelation to Fe(2+) ions. Functionally, prolyl hydroxylase that mediates hydroxylation of proline residues in target proteins, such as PKM, TELO2, ATF4 and HIF1A. Target proteins are preferentially recognized via a LXXLAP motif. Cellular oxygen sensor that catalyzes, under normoxic conditions, the post-translational formation of 4-hydroxyproline in hypoxia-inducible factor (HIF) alpha proteins. Hydroxylates a specific proline found in each of the oxygen-dependent degradation (ODD) domains (N-terminal, NODD, and C-terminal, CODD) of HIF1A. Also hydroxylates HIF2A. Has a preference for the CODD site for both HIF1A and HIF2A. Hydroxylation on the NODD site by EGLN3 appears to require prior hydroxylation on the CODD site. Hydroxylated HIFs are then targeted for proteasomal degradation via the von Hippel-Lindau ubiquitination complex. Under hypoxic conditions, the hydroxylation reaction is attenuated allowing HIFs to escape degradation resulting in their translocation to the nucleus, heterodimerization with HIF1B, and increased expression of hypoxy-inducible genes. ELGN3 is the most important isozyme in limiting physiological activation of HIFs (particularly HIF2A) in hypoxia. Also hydroxylates PKM in hypoxia, limiting glycolysis. Under normoxia, hydroxylates and regulates the stability of ADRB2. Regulator of cardiomyocyte and neuronal apoptosis. In cardiomyocytes, inhibits the anti-apoptotic effect of BCL2 by disrupting the BAX-BCL2 complex. In neurons, has a NGF-induced proapoptotic effect, probably through regulating CASP3 activity. Also essential for hypoxic regulation of neutrophilic inflammation. Plays a crucial role in DNA damage response (DDR) by hydroxylating TELO2, promoting its interaction with ATR which is required for activation of the ATR/CHK1/p53 pathway. Also mediates hydroxylation of ATF4, leading to decreased protein stability of ATF4. This chain is Prolyl hydroxylase EGLN3, found in Homo sapiens (Human).